The sequence spans 491 residues: Glycogen synthase (491 aa).

Lysine 15 provides a ligand contact to ADP-alpha-D-glucose.

This sequence belongs to the glycosyltransferase 1 family. Bacterial/plant glycogen synthase subfamily.

It carries out the reaction [(1-&gt;4)-alpha-D-glucosyl](n) + ADP-alpha-D-glucose = [(1-&gt;4)-alpha-D-glucosyl](n+1) + ADP + H(+). It participates in glycan biosynthesis; glycogen biosynthesis. In terms of biological role, synthesizes alpha-1,4-glucan chains using ADP-glucose. This chain is Glycogen synthase, found in Treponema denticola (strain ATCC 35405 / DSM 14222 / CIP 103919 / JCM 8153 / KCTC 15104).